The following is a 416-amino-acid chain: UDP-N-acetylglucosamine 1-carboxyvinyltransferase (416 aa).

Residue 22-23 participates in phosphoenolpyruvate binding; sequence KN. Arginine 91 contacts UDP-N-acetyl-alpha-D-glucosamine. The Proton donor role is filled by cysteine 115. 2-(S-cysteinyl)pyruvic acid O-phosphothioketal is present on cysteine 115. Residues 120–124, aspartate 303, and isoleucine 325 each bind UDP-N-acetyl-alpha-D-glucosamine; that span reads RPVDL.

This sequence belongs to the EPSP synthase family. MurA subfamily.

The protein resides in the cytoplasm. It carries out the reaction phosphoenolpyruvate + UDP-N-acetyl-alpha-D-glucosamine = UDP-N-acetyl-3-O-(1-carboxyvinyl)-alpha-D-glucosamine + phosphate. It functions in the pathway cell wall biogenesis; peptidoglycan biosynthesis. In terms of biological role, cell wall formation. Adds enolpyruvyl to UDP-N-acetylglucosamine. The protein is UDP-N-acetylglucosamine 1-carboxyvinyltransferase of Oleidesulfovibrio alaskensis (strain ATCC BAA-1058 / DSM 17464 / G20) (Desulfovibrio alaskensis).